Consider the following 156-residue polypeptide: Ribonuclease 7 (156 aa).

The N-terminal stretch at M1–A28 is a signal peptide. The segment at K29 to G32 is important for antibacterial activity. H43 functions as the Proton acceptor in the catalytic mechanism. DUMP-binding residues include H43, K66, N69, and T70. 4 disulfide bridges follow: C51-C109, C65-C119, C83-C134, and C90-C97. Residue N127 is glycosylated (N-linked (GlcNAc...) asparagine). The important for antibacterial activity stretch occupies residues K139–K140. DUMP contacts are provided by H151 and R154. H151 acts as the Proton donor in catalysis.

Expressed in collecting ducts in kidney, and in apical uroepithelium in bladder (at protein level). Expressed in various epithelial tissues including skin, respiratory tract, genito-urinary tract and, at a low level, in the gut. Expressed in liver, kidney, skeletal muscle and heart.

It is found in the secreted. Functionally, exhibits a potent RNase activity. Has broad-spectrum antimicrobial activity against many pathogenic microorganisms including uropathogenic E.coli (UPEC), and remarkably potent activity (lethal dose of 90% &lt; 30 nM) against a vancomycin resistant Enterococcus faecium. Causes loss of bacterial membrane integrity. Probably contributes to urinary tract sterility. Bactericidal activity is independent of RNase activity. This chain is Ribonuclease 7 (RNASE7), found in Homo sapiens (Human).